We begin with the raw amino-acid sequence, 499 residues long: GTPase Der (499 aa).

2 consecutive EngA-type G domains span residues 3-166 and 213-386; these read PVVA…LETL and IKFA…QSAT. GTP-binding positions include 9–16, 56–60, 118–121, 219–226, 266–270, and 331–334; these read GRPNVGKS, DTGGI, NKTD, DTAGV, and NKWD. One can recognise a KH-like domain in the interval 387-471; that stretch reads RRTSTAMLTR…PVRVEFQESA (85 aa).

Belongs to the TRAFAC class TrmE-Era-EngA-EngB-Septin-like GTPase superfamily. EngA (Der) GTPase family. In terms of assembly, associates with the 50S ribosomal subunit.

Its function is as follows. GTPase that plays an essential role in the late steps of ribosome biogenesis. This Aeromonas hydrophila subsp. hydrophila (strain ATCC 7966 / DSM 30187 / BCRC 13018 / CCUG 14551 / JCM 1027 / KCTC 2358 / NCIMB 9240 / NCTC 8049) protein is GTPase Der.